An 88-amino-acid chain; its full sequence is Kunitz-type U15-theraphotoxin-Hhn1h (88 aa).

The N-terminal stretch at methionine 1–alanine 27 is a signal peptide. A propeptide spanning residues glutamate 28–arginine 33 is cleaved from the precursor. One can recognise a BPTI/Kunitz inhibitor domain in the interval cysteine 37 to cysteine 85. Disulfide bonds link cysteine 37/cysteine 85 and cysteine 60/cysteine 81.

It belongs to the venom Kunitz-type family. 03 (sub-Kunitz) subfamily. In terms of tissue distribution, expressed by the venom gland.

Its subcellular location is the secreted. Its function is as follows. Serine protease inhibitor that inhibits trypsin at a molar ratio of 1:1. The chain is Kunitz-type U15-theraphotoxin-Hhn1h from Cyriopagopus hainanus (Chinese bird spider).